The following is a 157-amino-acid chain: Protein-export protein SecB (157 aa).

The protein belongs to the SecB family. In terms of assembly, homotetramer, a dimer of dimers. One homotetramer interacts with 1 SecA dimer.

The protein resides in the cytoplasm. Functionally, one of the proteins required for the normal export of preproteins out of the cell cytoplasm. It is a molecular chaperone that binds to a subset of precursor proteins, maintaining them in a translocation-competent state. It also specifically binds to its receptor SecA. This is Protein-export protein SecB from Photobacterium profundum (strain SS9).